An 835-amino-acid polypeptide reads, in one-letter code: Ribonucleoside-diphosphate reductase large subunit (835 aa).

Substrate-binding positions include Ser222, 237 to 238 (SC), Gly266, 447 to 451 (NLCCE), and 660 to 664 (PSASS). A disulfide bond links Cys238 and Cys464. Asn447 serves as the catalytic Proton acceptor. Cys449 acts as the Cysteine radical intermediate in catalysis. Glu451 serves as the catalytic Proton acceptor.

Belongs to the ribonucleoside diphosphate reductase large chain family. As to quaternary structure, heterotetramer composed of a homodimer of the large subunit (R1) and a homodimer of the small subunit (R2). Larger multisubunit protein complex are also active, composed of (R1)n(R2)n.

It carries out the reaction a 2'-deoxyribonucleoside 5'-diphosphate + [thioredoxin]-disulfide + H2O = a ribonucleoside 5'-diphosphate + [thioredoxin]-dithiol. In terms of biological role, ribonucleoside-diphosphate reductase holoenzyme provides the precursors necessary for viral DNA synthesis. Allows virus growth in non-dividing cells. Catalyzes the biosynthesis of deoxyribonucleotides from the corresponding ribonucleotides. This is Ribonucleoside-diphosphate reductase large subunit from Magallana gigas (Pacific oyster).